The sequence spans 251 residues: Triosephosphate isomerase (251 aa).

Position 12–14 (12–14) interacts with substrate; it reads NWK. His-99 acts as the Electrophile in catalysis. The Proton acceptor role is filled by Glu-169. Substrate-binding positions include Gly-175, Ser-214, and 235 to 236; that span reads GG.

Belongs to the triosephosphate isomerase family. As to quaternary structure, homodimer.

The protein localises to the cytoplasm. It carries out the reaction D-glyceraldehyde 3-phosphate = dihydroxyacetone phosphate. It functions in the pathway carbohydrate biosynthesis; gluconeogenesis. It participates in carbohydrate degradation; glycolysis; D-glyceraldehyde 3-phosphate from glycerone phosphate: step 1/1. Involved in the gluconeogenesis. Catalyzes stereospecifically the conversion of dihydroxyacetone phosphate (DHAP) to D-glyceraldehyde-3-phosphate (G3P). This Bradyrhizobium sp. (strain ORS 278) protein is Triosephosphate isomerase.